Consider the following 152-residue polypeptide: UPF0225 protein Ent638_2310 (152 aa).

Belongs to the UPF0225 family.

This Enterobacter sp. (strain 638) protein is UPF0225 protein Ent638_2310.